Consider the following 210-residue polypeptide: Proteasome subunit beta (210 aa).

Residues 1–9 (MDNDKHLKG) constitute a propeptide, removed in mature form; by autocatalysis. The active-site Nucleophile is the threonine 10.

This sequence belongs to the peptidase T1B family. As to quaternary structure, the 20S proteasome core is composed of 14 alpha and 14 beta subunits that assemble into four stacked heptameric rings, resulting in a barrel-shaped structure. The two inner rings, each composed of seven catalytic beta subunits, are sandwiched by two outer rings, each composed of seven alpha subunits. The catalytic chamber with the active sites is on the inside of the barrel. Has a gated structure, the ends of the cylinder being occluded by the N-termini of the alpha-subunits. Is capped at one or both ends by the proteasome regulatory ATPase, PAN.

Its subcellular location is the cytoplasm. The enzyme catalyses Cleavage of peptide bonds with very broad specificity.. The formation of the proteasomal ATPase PAN-20S proteasome complex, via the docking of the C-termini of PAN into the intersubunit pockets in the alpha-rings, triggers opening of the gate for substrate entry. Interconversion between the open-gate and close-gate conformations leads to a dynamic regulation of the 20S proteasome proteolysis activity. Its function is as follows. Component of the proteasome core, a large protease complex with broad specificity involved in protein degradation. The polypeptide is Proteasome subunit beta (Methanohalophilus mahii (strain ATCC 35705 / DSM 5219 / SLP)).